Here is a 180-residue protein sequence, read N- to C-terminus: MMKFKPNQTRTYDREGFKKRAACLCFRSEQEDEVLLVSSSRYPDQWIVPGGGMEPEEEPGGAAVREVYEEAGVKGKLGRLLGIFENQDRKHRTYVYVLTVTEILEDWEDSVNIGRKREWFKVEDAIKVLQCHKPVHAEYLEKLKLGCSPANGNSTVPSLPDNNALFVTAAQTSGLPSSVR.

Methionine 1 bears the N-acetylmethionine mark. Substrate is bound by residues arginine 10, 18–20 (KKR), and 39–41 (SSR). The Nudix hydrolase domain occupies 18 to 144 (KKRAACLCFR…VHAEYLEKLK (127 aa)). 2 residues coordinate Mg(2+): glycine 50 and glutamate 66. A Nudix box motif is present at residues 51-72 (GGMEPEEEPGGAAVREVYEEAG). The Proton acceptor role is filled by glutamate 69. Glutamate 70 serves as a coordination point for Mg(2+). Substrate-binding positions include 89 to 91 (RKH), arginine 115, and lysine 133.

This sequence belongs to the Nudix hydrolase family. DIPP subfamily. The cofactor is Mg(2+). Requires Mn(2+) as cofactor. In terms of tissue distribution, expressed in heart and, at lower level in skeletal muscle, pancreas and kidney.

It localises to the cytoplasm. The catalysed reaction is diphospho-myo-inositol polyphosphate + H2O = myo-inositol polyphosphate + phosphate.. It carries out the reaction 5-diphospho-1D-myo-inositol 1,2,3,4,6-pentakisphosphate + H2O = 1D-myo-inositol hexakisphosphate + phosphate + H(+). It catalyses the reaction 3,5-bis(diphospho)-1D-myo-inositol 1,2,4,6-tetrakisphosphate + H2O = 3-diphospho-1D-myo-inositol 1,2,4,5,6-pentakisphosphate + phosphate + 2 H(+). The enzyme catalyses 5-diphospho-1D-myo-inositol 1,3,4,6-tetrakisphosphate + H2O = 1D-myo-inositol 1,3,4,5,6-pentakisphosphate + phosphate + H(+). The catalysed reaction is P(1),P(6)-bis(5'-adenosyl) hexaphosphate + H2O = 2 ATP + 2 H(+). It carries out the reaction P(1),P(5)-bis(5'-adenosyl) pentaphosphate + H2O = ADP + ATP + 2 H(+). It catalyses the reaction 5-phospho-alpha-D-ribose 1-diphosphate + H2O = alpha-D-ribose 1,5-bisphosphate + phosphate + H(+). Cleaves the beta-phosphate from diphosphoinositol polyphosphates such as PP-InsP5 (diphosphoinositol pentakisphosphate), PP-InsP4 (diphosphoinositol tetrakisphosphate) and [PP]2-InsP4 (bisdiphosphoinositol tetrakisphosphate), suggesting that it may play a role in signal transduction. Diadenosine polyphosphates, particularly Ap6A (P(1),P(6)-bis(5a-adenosyl) hexaphosphate) and Ap5A (P(1),P(5)-bis(5'-adenosyl) pentaphosphate) are downstream effectors of a signaling cascade that regulates cardiac KATP channels, can also be substrates, although with lower preference than the diphosphoinositol polyphosphates. Can also catalyze the hydrolysis of 5-phosphoribose 1-diphosphate, generating the glycolytic activator ribose 1,5-bisphosphate. Does not play a role in U8 snoRNA decapping activity. Binds U8 snoRNA. This chain is Diphosphoinositol polyphosphate phosphohydrolase 2, found in Homo sapiens (Human).